A 510-amino-acid chain; its full sequence is Tryptophan 6-hydroxylase fscE (510 aa).

The chain crosses the membrane as a helical span at residues 11-31 (LLPIEGVIILVFVLSCFSLAI). C452 lines the heme pocket.

It belongs to the cytochrome P450 family. Requires heme as cofactor.

It is found in the membrane. It functions in the pathway secondary metabolite biosynthesis. In terms of biological role, tryptophan 6-hydroxylase; part of the fragmented gene cluster that mediates the biosynthesis of fusarochromene, a tryptophan-derived metabolite closely related to a group of mycotoxins including fusarochromanone. Within the pathway, fscE hydroxalates the first intermediate D-tryptophan to yield 6-hydroxytryptophan. The first step of the pathway is the epimerization of L-tryptophan to D-tryptophan in the presence of the NRPS-like tryptophan epimerase fscC. D-tryptophan is subsequently hydroxylated by the tryptophan 6-hydroxylase fscE to yield 6-hydroxytryptophan. The pyrrole ring undergoes cleavaged by the tryptophan 2,3-dioxygenase fscD and is finally converted to 4-hydroxykyrunenine by the hydrolase fscH. The NRPS-like oxidoreductase fscA reduces the carboxyl group to primary alcohol and the DMATS-type prenyltransferase fscG performs prenylation, followed by the formation of a chromene ring catalyzed by the oxidoreductase fscI, which leads to desacetylfusarochromene. Epoxidation by fscF and rearrangement reactions of chromene double bonds convert compound desacetylfusarochromene to fusarochromanones. Although specific acetyltransferases were not found near the fsc gene cluster, several predicted enzymes containing the N-acetyltransferase superfamily domain are present in the genome of F.equiseti. These predicted enzymes may have the potential to convert desacetylfusarochromene to fusarochromene. The chain is Tryptophan 6-hydroxylase fscE from Fusarium equiseti (Fusarium scirpi).